The sequence spans 672 residues: UvrABC system protein B (672 aa).

Residues 26 to 181 (AGLEDGLAYQ…ILQRLAELQY (156 aa)) enclose the Helicase ATP-binding domain. ATP is bound at residue 39–46 (GVTGSGKT). The Beta-hairpin motif lies at 92-115 (YYDYYQPEAYVPSSDTYIEKDASI). Positions 430–592 (QVDDLLSEIK…ITPKSIQKAV (163 aa)) constitute a Helicase C-terminal domain. The region spanning 631–666 (AKELRKLEEQMYHHARNLEFEEAAAVRDKIQHIRKG) is the UVR domain.

The protein belongs to the UvrB family. As to quaternary structure, forms a heterotetramer with UvrA during the search for lesions. Interacts with UvrC in an incision complex.

It is found in the cytoplasm. In terms of biological role, the UvrABC repair system catalyzes the recognition and processing of DNA lesions. A damage recognition complex composed of 2 UvrA and 2 UvrB subunits scans DNA for abnormalities. Upon binding of the UvrA(2)B(2) complex to a putative damaged site, the DNA wraps around one UvrB monomer. DNA wrap is dependent on ATP binding by UvrB and probably causes local melting of the DNA helix, facilitating insertion of UvrB beta-hairpin between the DNA strands. Then UvrB probes one DNA strand for the presence of a lesion. If a lesion is found the UvrA subunits dissociate and the UvrB-DNA preincision complex is formed. This complex is subsequently bound by UvrC and the second UvrB is released. If no lesion is found, the DNA wraps around the other UvrB subunit that will check the other stand for damage. The polypeptide is UvrABC system protein B (Coxiella burnetii (strain CbuK_Q154) (Coxiella burnetii (strain Q154))).